Here is a 351-residue protein sequence, read N- to C-terminus: Dihydroorotate dehydrogenase (quinone) (351 aa).

FMN contacts are provided by residues 67–71 (AGFDK) and Thr-91. Lys-71 contributes to the substrate binding site. 116–120 (NAMGF) serves as a coordination point for substrate. FMN-binding residues include Asn-145 and Asn-178. Asn-178 lines the substrate pocket. Ser-181 functions as the Nucleophile in the catalytic mechanism. Asn-183 is a binding site for substrate. FMN contacts are provided by Lys-214 and Thr-242. Position 243–244 (243–244 (NT)) interacts with substrate. FMN-binding positions include Gly-262, Gly-291, and 312-313 (YS).

Belongs to the dihydroorotate dehydrogenase family. Type 2 subfamily. Monomer. FMN serves as cofactor.

The protein resides in the cell membrane. It carries out the reaction (S)-dihydroorotate + a quinone = orotate + a quinol. The protein operates within pyrimidine metabolism; UMP biosynthesis via de novo pathway; orotate from (S)-dihydroorotate (quinone route): step 1/1. Catalyzes the conversion of dihydroorotate to orotate with quinone as electron acceptor. In Helicobacter pylori (strain ATCC 700392 / 26695) (Campylobacter pylori), this protein is Dihydroorotate dehydrogenase (quinone) (pyrD).